The following is a 3164-amino-acid chain: Protein eyes shut homolog (3164 aa).

The N-terminal stretch at 1-21 (MTDKSIIILSLMVFHSSFING) is a signal peptide. N42, N105, N117, and N166 each carry an N-linked (GlcNAc...) asparagine glycan. 3 consecutive EGF-like domains span residues 170–212 (KQQF…KYCQ), 213–254 (ELDA…KNCS), and 256–292 (IIGQ…PFCE). 9 disulfide bridges follow: C174-C189, C183-C200, C202-C211, C217-C228, C222-C242, C244-C253, C260-C270, C265-C280, and C282-C291. N-linked (GlcNAc...) asparagine glycosylation is found at N225, N252, N269, and N272. 2 N-linked (GlcNAc...) asparagine glycosylation sites follow: N311 and N343. 2 EGF-like domains span residues 332–368 (DVSE…LLCK) and 370–406 (IQTS…KNCE). 5 cysteine pairs are disulfide-bonded: C336/C347, C341/C356, C358/C367, C374/C385, and C396/C405. N382 is a glycosylation site (N-linked (GlcNAc...) asparagine). N-linked (GlcNAc...) asparagine glycans are attached at residues N506, N521, and N566. An EGF-like 6 domain is found at 567–602 (TTDDQENECQHEAICKDEINRPRCSCSLSYIGRLCV). Cystine bridges form between C575/C590 and C592/C601. N-linked (GlcNAc...) asparagine glycans are attached at residues N611 and N654. An EGF-like 7 domain is found at 643–679 (DTEDCKSVSCKNGTTSIHLRGYFFCKCVPGFKGTQRE). Cystine bridges form between C652–C667, C685–C696, C690–C705, C707–C719, C737–C748, and C742–C757. The region spanning 681–720 (DIDECASHPCKNGATCIDQPGNYFCQCVPPFKVVDGFSCL) is the EGF-like 8; calcium-binding domain. The 37-residue stretch at 733 to 769 (DIDDCILNACEHNSTCKDLHLSYQCVCLSGWEGNFSE) folds into the EGF-like 9; calcium-binding domain. N-linked (GlcNAc...) asparagine glycans are attached at residues N745, N766, N782, N783, and N805. The EGF-like 10; calcium-binding domain occupies 771 to 807 (ESNECKMNPCKNNSTCIDLYKSYRCECTSGWTGQNCS). Disulfide bonds link C775–C786, C780–C795, C797–C806, C813–C824, C818–C835, C837–C846, C853–C866, C860–C876, C878–C887, C894–C905, C899–C914, C916–C925, C932–C943, C937–C952, C954–C963, C970–C981, C975–C990, C992–C1001, C1008–C1019, C1013–C1028, C1030–C1039, C1046–C1056, C1051–C1065, C1067–C1076, C1083–C1094, C1088–C1103, C1105–C1114, C1121–C1137, C1131–C1147, C1149–C1158, C1165–C1176, C1170–C1185, and C1187–C1196. EGF-like domains lie at 809–847 (EINE…RFCH), 849–888 (RYNP…KNCE), and 890–926 (DVKE…SLCE). N862 and N863 each carry an N-linked (GlcNAc...) asparagine glycan. An EGF-like 14; calcium-binding domain is found at 928–964 (EINECSSEPCKNNGTCVDLTNRFFCNCEPGYHGPFCE). Residue N940 is glycosylated (N-linked (GlcNAc...) asparagine). The EGF-like 15 domain occupies 966–1002 (DVNKCKISPCLDEENCVYRTDGYNCLCAPGYTGINCE). The 37-residue stretch at 1004–1040 (NLDECLSEPCLHDGVCIDGINHYTCDCKSGFFGTHCE) folds into the EGF-like 16; calcium-binding domain. EGF-like domains follow at residues 1042–1077 (NAND…TQCK), 1079–1115 (KIND…AYCE), and 1117–1159 (SIDN…QFCE). Positions 1161 to 1197 (NINECSSSPCLHGADCEDHINGYVCKCQPGWSGHHCE) constitute an EGF-like 20; calcium-binding domain. N-linked (GlcNAc...) asparagine glycosylation is found at N1509, N1522, N1906, N1941, N1960, and N2033. Positions 1883-2063 (FSCVRYYGDS…AVKNYHINNC (181 aa)) constitute a Laminin G-like 1 domain. Intrachain disulfides connect C2037–C2063, C2103–C2114, C2108–C2128, and C2130–C2139. Residues 2099–2140 (APSVCQQDVCHNGGTCHPIFLSRGIVSFQCDCPLHFTGRFCE) enclose the EGF-like 21 domain. The Laminin G-like 2 domain occupies 2145–2339 (LFFPSFNGNS…NIENCHVPWC (195 aa)). N-linked (GlcNAc...) asparagine glycans are attached at residues N2170, N2185, and N2228. Cystine bridges form between C2308–C2339, C2339–C2350, C2344–C2359, C2375–C2386, C2380–C2396, and C2398–C2407. EGF-like domains lie at 2335 to 2368 (HVPW…YSGK) and 2371 to 2408 (QFAS…PLCT). N2347 is a glycosylation site (N-linked (GlcNAc...) asparagine). N2412, N2453, N2484, N2506, and N2532 each carry an N-linked (GlcNAc...) asparagine glycan. The Laminin G-like 3 domain maps to 2419-2609 (SGTDAFGYTS…PNAGRSVGQC (191 aa)). Disulfide bonds link C2576–C2609, C2614–C2625, and C2619–C2634. EGF-like domains are found at residues 2610-2646 (HASP…AFCT) and 2648-2689 (TVST…IYCE). N2635 is a glycosylation site (N-linked (GlcNAc...) asparagine). 4 cysteine pairs are disulfide-bonded: C2636-C2645, C2652-C2668, C2662-C2677, and C2679-C2688. In terms of domain architecture, Laminin G-like 4 spans 2717-2895 (DPSFRSNELS…AKGGSNVGDC (179 aa)). N-linked (GlcNAc...) asparagine glycans are attached at residues N2775, N2800, and N2824. Cystine bridges form between C2868/C2895, C2900/C2911, C2905/C2920, and C2922/C2931. EGF-like domains follow at residues 2896–2932 (DGTA…NTCN) and 2933–2970 (QSVY…RYCE). N-linked (GlcNAc...) asparagine glycosylation occurs at N2914. Residue N2932 is glycosylated (N-linked (GlcNAc...) asparagine). 3 disulfide bridges follow: C2937–C2948, C2942–C2958, and C2960–C2969. N2951 is a glycosylation site (N-linked (GlcNAc...) asparagine). N-linked (GlcNAc...) asparagine glycosylation is found at N2971, N3006, N3036, N3057, N3073, and N3082. The region spanning 2975 to 3164 (FSTAKFMGNS…YDGDEQNEVT (190 aa)) is the Laminin G-like 5 domain.

It belongs to the EYS family.

The protein localises to the cell projection. It is found in the cilium. It localises to the photoreceptor outer segment. Its subcellular location is the cytoplasm. The protein resides in the cytoskeleton. The protein localises to the cilium axoneme. It is found in the microtubule organizing center. It localises to the centrosome. Its subcellular location is the secreted. The protein resides in the extracellular space. The protein localises to the extracellular matrix. It is found in the interphotoreceptor matrix. Its function is as follows. Required to maintain the integrity of photoreceptor cells. Specifically required for normal morphology of the photoreceptor ciliary pocket, and might thus facilitate protein trafficking between the photoreceptor inner and outer segments via the transition zone. The protein is Protein eyes shut homolog (EYS) of Pongo abelii (Sumatran orangutan).